The chain runs to 61 residues: MAKKSMIAKAARKPKFKVRAYTRCQICGRPHSVYRDFGICRVCLRKMGNEGLIPGLKKASW.

Zn(2+) is bound by residues Cys24, Cys27, Cys40, and Cys43.

Belongs to the universal ribosomal protein uS14 family. Zinc-binding uS14 subfamily. In terms of assembly, part of the 30S ribosomal subunit. Contacts proteins S3 and S10. Zn(2+) is required as a cofactor.

Binds 16S rRNA, required for the assembly of 30S particles and may also be responsible for determining the conformation of the 16S rRNA at the A site. The sequence is that of Small ribosomal subunit protein uS14 from Campylobacter jejuni subsp. jejuni serotype O:6 (strain 81116 / NCTC 11828).